The chain runs to 416 residues: MMQAHDVLTLTEPPLDLDLIDLDEDFDDEDIELELEETSDSNDGKKTRRLASARRRDAARKKPYTEDSIRIYLQEIGRIRLLRAEEEIELARKIADLLKLERIREDFCLYSDAEWGKQVFLFERIEKIIVEKSEKEPKLSDIKAYLGKTELTAPLLEEWLAKSKEYLSAFKRRLYHGRRAKEKMVQSNLRLVVSIAKKYMNRGLSFQDLIQEGSLGLIRAAEKFDHEKGYKFSTYATWWIRQAITRAIADQSRTIRLPVHLYETISRIKKTTKILSQEMRRKPTEEEIATKMEMTIEKLRFIAKSAQLPISLETPIGKEEDSRLGDFIEADGETPEDEVSKNLLREDLENVLDTLSPRERDVLRLRYGLDDGRMKTLEEIGQIFNVTRERIRQIEAKALRKLRHPNRNSILKEYIR.

The sigma-70 factor domain-2 stretch occupies residues 184–254 (MVQSNLRLVV…TRAIADQSRT (71 aa)). Positions 208–211 (DLIQ) match the Interaction with polymerase core subunit RpoC motif. A sigma-70 factor domain-3 region spans residues 263 to 338 (ETISRIKKTT…EADGETPEDE (76 aa)). The segment at 351 to 404 (VLDTLSPRERDVLRLRYGLDDGRMKTLEEIGQIFNVTRERIRQIEAKALRKLRH) is sigma-70 factor domain-4. Residues 377–396 (LEEIGQIFNVTRERIRQIEA) constitute a DNA-binding region (H-T-H motif).

Belongs to the sigma-70 factor family. RpoD/SigA subfamily. In terms of assembly, interacts transiently with the RNA polymerase catalytic core.

Its subcellular location is the cytoplasm. Sigma factors are initiation factors that promote the attachment of RNA polymerase to specific initiation sites and are then released. This sigma factor is the primary sigma factor during exponential growth. In Microcystis aeruginosa, this protein is RNA polymerase sigma factor SigA.